The chain runs to 333 residues: MLVLGIESSCDETGVAVYDSESGLLSHALHSQIATHRVHGGVVPELASRDHVNYLVPLVDEVLTKAQIRKNQLDGIAYTAGPGLIGALLVGSCFAKSLAYALNIPALAIHHLEAHLLAAKMETPSLDFPFIALLVSGGHCQLIEVNNIGEYRLLGDTLDDAVGEAFDKTAKLMGIPYPGGAVLANLADQCLSTPYQFPRPMTDRPGLDFSFSGLKTHALNTWNQSEKKESDRSEIAKAFQQAVVETLIIKCKRAIKESQSKRLVVAGGVGANKALRSALQKWIKDIKGEVYFPALEYCTDNGAMVAYAGCLRMMRGESDGGWGVMVKPRWPLA.

Histidine 111 and histidine 115 together coordinate Fe cation. Substrate contacts are provided by residues 134–138 (LVSGG), aspartate 167, glycine 180, and asparagine 272. Position 300 (aspartate 300) interacts with Fe cation.

This sequence belongs to the KAE1 / TsaD family. It depends on Fe(2+) as a cofactor.

It is found in the cytoplasm. The enzyme catalyses L-threonylcarbamoyladenylate + adenosine(37) in tRNA = N(6)-L-threonylcarbamoyladenosine(37) in tRNA + AMP + H(+). Functionally, required for the formation of a threonylcarbamoyl group on adenosine at position 37 (t(6)A37) in tRNAs that read codons beginning with adenine. Is involved in the transfer of the threonylcarbamoyl moiety of threonylcarbamoyl-AMP (TC-AMP) to the N6 group of A37, together with TsaE and TsaB. TsaD likely plays a direct catalytic role in this reaction. The chain is tRNA N6-adenosine threonylcarbamoyltransferase from Legionella pneumophila (strain Paris).